Reading from the N-terminus, the 253-residue chain is uncharacterized protein (253 aa).

The N-terminal stretch at 1 to 15 (MNRVILFHFHFFKNA) is a signal peptide.

This is an uncharacterized protein from Archaeoglobus fulgidus (strain ATCC 49558 / DSM 4304 / JCM 9628 / NBRC 100126 / VC-16).